A 527-amino-acid polypeptide reads, in one-letter code: UPF0053 protein YegH (527 aa).

5 helical membrane-spanning segments follow: residues 14–34, 51–71, 81–101, 145–165, and 185–205; these read ITLIVIELVLGIDNLVFIAIL, LLLAMLMRLLLLASISWLVTL, FTFSARDLIMLFGGFFLLFKA, ITAVGMVDHLLVMMAAVVIAI, and IVILCLSFLLMIGFSLVAEGF. CBS domains follow at residues 306-366 and 371-429; these read MTSR…GEPL and LIRQ…PNEV.

This sequence belongs to the UPF0053 family.

It localises to the cell membrane. This chain is UPF0053 protein YegH (yegH), found in Escherichia coli (strain K12).